The chain runs to 51 residues: Large ribosomal subunit protein eL39 (51 aa).

It belongs to the eukaryotic ribosomal protein eL39 family.

This Picrophilus torridus (strain ATCC 700027 / DSM 9790 / JCM 10055 / NBRC 100828 / KAW 2/3) protein is Large ribosomal subunit protein eL39.